Here is a 486-residue protein sequence, read N- to C-terminus: Bifunctional protein HldE (486 aa).

The segment at 1 to 331 is ribokinase; sequence MSTNVADLLH…NALTAESVPV (331 aa). 207–210 provides a ligand contact to ATP; sequence NLGE. The active site involves Asp276. The interval 358 to 486 is cytidylyltransferase; sequence VTNGCFDLLH…STTKLIEKGH (129 aa).

It in the N-terminal section; belongs to the carbohydrate kinase PfkB family. In the C-terminal section; belongs to the cytidylyltransferase family. As to quaternary structure, homodimer.

It carries out the reaction D-glycero-beta-D-manno-heptose 7-phosphate + ATP = D-glycero-beta-D-manno-heptose 1,7-bisphosphate + ADP + H(+). The catalysed reaction is D-glycero-beta-D-manno-heptose 1-phosphate + ATP + H(+) = ADP-D-glycero-beta-D-manno-heptose + diphosphate. Its pathway is nucleotide-sugar biosynthesis; ADP-L-glycero-beta-D-manno-heptose biosynthesis; ADP-L-glycero-beta-D-manno-heptose from D-glycero-beta-D-manno-heptose 7-phosphate: step 1/4. It functions in the pathway nucleotide-sugar biosynthesis; ADP-L-glycero-beta-D-manno-heptose biosynthesis; ADP-L-glycero-beta-D-manno-heptose from D-glycero-beta-D-manno-heptose 7-phosphate: step 3/4. Its function is as follows. Catalyzes the phosphorylation of D-glycero-D-manno-heptose 7-phosphate at the C-1 position to selectively form D-glycero-beta-D-manno-heptose-1,7-bisphosphate. Functionally, catalyzes the ADP transfer from ATP to D-glycero-beta-D-manno-heptose 1-phosphate, yielding ADP-D-glycero-beta-D-manno-heptose. This is Bifunctional protein HldE from Koribacter versatilis (strain Ellin345).